The following is a 974-amino-acid chain: Ephrin type-B receptor 3 (974 aa).

An N-terminal signal peptide occupies residues Met1–Gly16. Residues Leu17 to Met534 are Extracellular-facing. The 179-residue stretch at Glu18 to Ala196 folds into the Eph LBD domain. Residues Cys60 and Cys178 are joined by a disulfide bond. Fibronectin type-III domains lie at Val318–Ala426 and Ala427–Asp522. Asn330 and Asn420 each carry an N-linked (GlcNAc...) asparagine glycan. The helical transmembrane segment at Val535–Val555 threads the bilayer. Topologically, residues Cys556–Val974 are cytoplasmic. Tyr590 bears the Phosphotyrosine; by autocatalysis mark. The region spanning Val609–Ile872 is the Protein kinase domain. Residues Ile615–Val623 and Lys641 contribute to the ATP site. The Proton acceptor role is filled by Asp734. The region spanning Thr901–Gln965 is the SAM domain. Residues Val972–Val974 carry the PDZ-binding motif.

The protein belongs to the protein kinase superfamily. Tyr protein kinase family. Ephrin receptor subfamily. In terms of assembly, heterotetramer upon binding of the ligand. The heterotetramer is composed of an ephrin dimer and a receptor dimer. Oligomerization is probably required to induce biological responses. In terms of processing, phosphorylated. Autophosphorylates upon ligand-binding. Autophosphorylation on Tyr-590 is required for interaction with SH2 domain-containing proteins. Expressed in the embryo in pre-somitic mesoderm, caudal somites, midbrain, and cement gland. Most abundant in adult brain, eye, heart, lung and ovary. Lower levels in intestine, kidney, oviduct and pharynx.

The protein localises to the cell membrane. The protein resides in the cell projection. It is found in the dendrite. It carries out the reaction L-tyrosyl-[protein] + ATP = O-phospho-L-tyrosyl-[protein] + ADP + H(+). Functionally, receptor tyrosine kinase which binds promiscuously transmembrane ephrin-B family ligands residing on adjacent cells, leading to contact-dependent bidirectional signaling into neighboring cells. The signaling pathway downstream of the receptor is referred to as forward signaling while the signaling pathway downstream of the ephrin ligand is referred to as reverse signaling. Generally has an overlapping and redundant function with EPHB2. Like EPHB2, functions in axon guidance during development. In addition to its role in axon guidance also plays an important redundant role with other ephrin-B receptors in development and maturation of dendritic spines and the formation of excitatory synapses. May control other aspects of development through regulation of cell migration and positioning. The protein is Ephrin type-B receptor 3 (ephb3) of Xenopus laevis (African clawed frog).